The chain runs to 308 residues: Phenylcoumaran benzylic ether reductase PT1 (308 aa).

Residues 11 to 17 (GATGYIG), Arg36, and Lys46 contribute to the NADP(+) site. Lys134 functions as the Proton acceptor in the catalytic mechanism. Residue Arg138 coordinates NADP(+).

The protein belongs to the NmrA-type oxidoreductase family. Isoflavone reductase subfamily.

It carries out the reaction (-)-dehydrodiconiferyl alcohol + NADPH + H(+) = (S)-isodihydrodehydrodiconiferyl alcohol + NADP(+). It catalyses the reaction (+)-dehydrodiconiferyl alcohol + NADPH + H(+) = (R)-isodihydrodehydrodiconiferyl alcohol + NADP(+). The catalysed reaction is (2R,3S)-dihydrodehydrodiconiferyl alcohol + NADPH + H(+) = (S)-tetrahydrodehydrodiconiferyl alcohol + NADP(+). The enzyme catalyses (2S,3R)-dihydrodehydrodiconiferyl alcohol + NADPH + H(+) = (R)-tetrahydrodehydrodiconiferyl alcohol + NADP(+). Its function is as follows. Oxidoreductase involved in lignan biosynthesis. Catalyzes the NADPH-dependent reduction of phenylcoumaran benzylic ethers. Converts dehydrodiconiferyl alcohol (DDC) to isodihydrodehydrodiconiferyl alcohol (IDDDC), and dihydrodehydrodiconiferyl alcohol (DDDC) to tetrahydrodehydrodiconiferyl alcohol (TDDC). In Pinus taeda (Loblolly pine), this protein is Phenylcoumaran benzylic ether reductase PT1.